The primary structure comprises 139 residues: ATP synthase epsilon chain (139 aa).

It belongs to the ATPase epsilon chain family. In terms of assembly, F-type ATPases have 2 components, CF(1) - the catalytic core - and CF(0) - the membrane proton channel. CF(1) has five subunits: alpha(3), beta(3), gamma(1), delta(1), epsilon(1). CF(0) has three main subunits: a, b and c.

It is found in the cell inner membrane. In terms of biological role, produces ATP from ADP in the presence of a proton gradient across the membrane. The polypeptide is ATP synthase epsilon chain (Erwinia tasmaniensis (strain DSM 17950 / CFBP 7177 / CIP 109463 / NCPPB 4357 / Et1/99)).